The sequence spans 95 residues: Aspartyl/glutamyl-tRNA(Asn/Gln) amidotransferase subunit C (95 aa).

This sequence belongs to the GatC family. Heterotrimer of A, B and C subunits.

It catalyses the reaction L-glutamyl-tRNA(Gln) + L-glutamine + ATP + H2O = L-glutaminyl-tRNA(Gln) + L-glutamate + ADP + phosphate + H(+). It carries out the reaction L-aspartyl-tRNA(Asn) + L-glutamine + ATP + H2O = L-asparaginyl-tRNA(Asn) + L-glutamate + ADP + phosphate + 2 H(+). Allows the formation of correctly charged Asn-tRNA(Asn) or Gln-tRNA(Gln) through the transamidation of misacylated Asp-tRNA(Asn) or Glu-tRNA(Gln) in organisms which lack either or both of asparaginyl-tRNA or glutaminyl-tRNA synthetases. The reaction takes place in the presence of glutamine and ATP through an activated phospho-Asp-tRNA(Asn) or phospho-Glu-tRNA(Gln). This chain is Aspartyl/glutamyl-tRNA(Asn/Gln) amidotransferase subunit C, found in Chlorobaculum tepidum (strain ATCC 49652 / DSM 12025 / NBRC 103806 / TLS) (Chlorobium tepidum).